Reading from the N-terminus, the 193-residue chain is Ribonuclease HII (193 aa).

One can recognise an RNase H type-2 domain in the interval 1–193; sequence MTLGIDEAGR…SFALKNNWFS (193 aa). A divalent metal cation is bound by residues Asp-6, Glu-7, and Asp-103.

It belongs to the RNase HII family. It depends on Mn(2+) as a cofactor. Mg(2+) serves as cofactor.

It localises to the cytoplasm. It catalyses the reaction Endonucleolytic cleavage to 5'-phosphomonoester.. Endonuclease that specifically degrades the RNA of RNA-DNA hybrids. The protein is Ribonuclease HII of Helicobacter acinonychis (strain Sheeba).